The following is a 171-amino-acid chain: Methylated-DNA--protein-cysteine methyltransferase (171 aa).

Cys-139 functions as the Nucleophile; methyl group acceptor in the catalytic mechanism.

This sequence belongs to the MGMT family.

The protein resides in the cytoplasm. The catalysed reaction is a 6-O-methyl-2'-deoxyguanosine in DNA + L-cysteinyl-[protein] = S-methyl-L-cysteinyl-[protein] + a 2'-deoxyguanosine in DNA. It carries out the reaction a 4-O-methyl-thymidine in DNA + L-cysteinyl-[protein] = a thymidine in DNA + S-methyl-L-cysteinyl-[protein]. Functionally, involved in the cellular defense against the biological effects of O6-methylguanine (O6-MeG) and O4-methylthymine (O4-MeT) in DNA. Repairs the methylated nucleobase in DNA by stoichiometrically transferring the methyl group to a cysteine residue in the enzyme. This is a suicide reaction: the enzyme is irreversibly inactivated. The protein is Methylated-DNA--protein-cysteine methyltransferase of Shigella flexneri.